The chain runs to 132 residues: Small ribosomal subunit protein uS8 (132 aa).

This sequence belongs to the universal ribosomal protein uS8 family. As to quaternary structure, part of the 30S ribosomal subunit. Contacts proteins S5 and S12.

In terms of biological role, one of the primary rRNA binding proteins, it binds directly to 16S rRNA central domain where it helps coordinate assembly of the platform of the 30S subunit. The chain is Small ribosomal subunit protein uS8 from Staphylococcus haemolyticus (strain JCSC1435).